Reading from the N-terminus, the 427-residue chain is Stabilizer of axonemal microtubules 4 (427 aa).

3 disordered regions span residues 82–105, 273–298, and 314–335; these read TSKS…PLPW, RTLN…QPPQ, and GNKE…SYEQ. 2 stretches are compositionally biased toward polar residues: residues 287-298 and 321-332; these read ASMSHRSYQPPQ and FTLNNPSYVRSS.

In terms of assembly, microtubule inner protein component of sperm flagellar doublet microtubules. Interacts with PPP1CA.

The protein resides in the cell projection. The protein localises to the cilium. It localises to the cytoplasm. Its subcellular location is the cytoskeleton. It is found in the flagellum axoneme. The protein is Stabilizer of axonemal microtubules 4 of Mus musculus (Mouse).